Here is a 211-residue protein sequence, read N- to C-terminus: Large ribosomal subunit protein uL4 (211 aa).

Residues 46-55 (GNHATKTRSM) are compositionally biased toward polar residues. Residues 46–89 (GNHATKTRSMVSGGGKKPWSQKGTGRARQGSTRAPHWVGGGTVH) are disordered.

Belongs to the universal ribosomal protein uL4 family. As to quaternary structure, part of the 50S ribosomal subunit.

One of the primary rRNA binding proteins, this protein initially binds near the 5'-end of the 23S rRNA. It is important during the early stages of 50S assembly. It makes multiple contacts with different domains of the 23S rRNA in the assembled 50S subunit and ribosome. Functionally, forms part of the polypeptide exit tunnel. The polypeptide is Large ribosomal subunit protein uL4 (Leptospira interrogans serogroup Icterohaemorrhagiae serovar copenhageni (strain Fiocruz L1-130)).